We begin with the raw amino-acid sequence, 349 residues long: DNA polymerase IV (349 aa).

Residues 4 to 185 (IIHIDCDCFY…LPVAKLHGVG (182 aa)) form the UmuC domain. Residues Asp8 and Asp103 each coordinate Mg(2+). The active site involves Glu104.

This sequence belongs to the DNA polymerase type-Y family. As to quaternary structure, monomer. It depends on Mg(2+) as a cofactor.

The protein resides in the cytoplasm. The catalysed reaction is DNA(n) + a 2'-deoxyribonucleoside 5'-triphosphate = DNA(n+1) + diphosphate. Functionally, poorly processive, error-prone DNA polymerase involved in untargeted mutagenesis. Copies undamaged DNA at stalled replication forks, which arise in vivo from mismatched or misaligned primer ends. These misaligned primers can be extended by PolIV. Exhibits no 3'-5' exonuclease (proofreading) activity. May be involved in translesional synthesis, in conjunction with the beta clamp from PolIII. In Pseudomonas aeruginosa (strain UCBPP-PA14), this protein is DNA polymerase IV.